Reading from the N-terminus, the 1372-residue chain is DNA-directed RNA polymerase subunit beta (1372 aa).

It belongs to the RNA polymerase beta chain family. In terms of assembly, the RNAP catalytic core consists of 2 alpha, 1 beta, 1 beta' and 1 omega subunit. When a sigma factor is associated with the core the holoenzyme is formed, which can initiate transcription.

The enzyme catalyses RNA(n) + a ribonucleoside 5'-triphosphate = RNA(n+1) + diphosphate. Its function is as follows. DNA-dependent RNA polymerase catalyzes the transcription of DNA into RNA using the four ribonucleoside triphosphates as substrates. This chain is DNA-directed RNA polymerase subunit beta, found in Rickettsia bellii (strain OSU 85-389).